Consider the following 309-residue polypeptide: Lipoyl synthase (309 aa).

[4Fe-4S] cluster contacts are provided by C37, C42, C48, C67, C71, C74, and S281. Positions 53-270 (DGPGTATFML…RVAETEFGFL (218 aa)) constitute a Radical SAM core domain.

Belongs to the radical SAM superfamily. Lipoyl synthase family. The cofactor is [4Fe-4S] cluster.

Its subcellular location is the cytoplasm. It catalyses the reaction [[Fe-S] cluster scaffold protein carrying a second [4Fe-4S](2+) cluster] + N(6)-octanoyl-L-lysyl-[protein] + 2 oxidized [2Fe-2S]-[ferredoxin] + 2 S-adenosyl-L-methionine + 4 H(+) = [[Fe-S] cluster scaffold protein] + N(6)-[(R)-dihydrolipoyl]-L-lysyl-[protein] + 4 Fe(3+) + 2 hydrogen sulfide + 2 5'-deoxyadenosine + 2 L-methionine + 2 reduced [2Fe-2S]-[ferredoxin]. It functions in the pathway protein modification; protein lipoylation via endogenous pathway; protein N(6)-(lipoyl)lysine from octanoyl-[acyl-carrier-protein]: step 2/2. Its function is as follows. Catalyzes the radical-mediated insertion of two sulfur atoms into the C-6 and C-8 positions of the octanoyl moiety bound to the lipoyl domains of lipoate-dependent enzymes, thereby converting the octanoylated domains into lipoylated derivatives. The protein is Lipoyl synthase of Natronomonas pharaonis (strain ATCC 35678 / DSM 2160 / CIP 103997 / JCM 8858 / NBRC 14720 / NCIMB 2260 / Gabara) (Halobacterium pharaonis).